The sequence spans 528 residues: Lanosterol 14-alpha demethylase (528 aa).

A helical transmembrane segment spans residues leucine 15 to tryptophan 37. Tyrosine 64 provides a ligand contact to oteseconazole. Tyrosine 118 lines the itraconazole pocket. Glycine 307 provides a ligand contact to posaconazole. An oteseconazole-binding site is contributed by histidine 377. Residue cysteine 470 coordinates heme.

It belongs to the cytochrome P450 family. Heme is required as a cofactor.

The protein resides in the endoplasmic reticulum membrane. It catalyses the reaction a 14alpha-methyl steroid + 3 reduced [NADPH--hemoprotein reductase] + 3 O2 = a Delta(14) steroid + formate + 3 oxidized [NADPH--hemoprotein reductase] + 4 H2O + 4 H(+). The enzyme catalyses a 14alpha-methyl steroid + reduced [NADPH--hemoprotein reductase] + O2 = a 14alpha-hydroxymethyl steroid + oxidized [NADPH--hemoprotein reductase] + H2O + H(+). The catalysed reaction is a 14alpha-hydroxymethyl steroid + reduced [NADPH--hemoprotein reductase] + O2 = a 14alpha-formyl steroid + oxidized [NADPH--hemoprotein reductase] + 2 H2O + H(+). It carries out the reaction a 14alpha-formyl steroid + reduced [NADPH--hemoprotein reductase] + O2 = a Delta(14) steroid + formate + oxidized [NADPH--hemoprotein reductase] + H2O + 2 H(+). It catalyses the reaction lanosterol + 3 reduced [NADPH--hemoprotein reductase] + 3 O2 = 4,4-dimethyl-5alpha-cholesta-8,14,24-trien-3beta-ol + formate + 3 oxidized [NADPH--hemoprotein reductase] + 4 H2O + 4 H(+). The enzyme catalyses lanosterol + reduced [NADPH--hemoprotein reductase] + O2 = 32-hydroxylanosterol + oxidized [NADPH--hemoprotein reductase] + H2O + H(+). The catalysed reaction is 32-hydroxylanosterol + reduced [NADPH--hemoprotein reductase] + O2 = 32-oxolanosterol + oxidized [NADPH--hemoprotein reductase] + 2 H2O + H(+). It carries out the reaction 32-oxolanosterol + reduced [NADPH--hemoprotein reductase] + O2 = 4,4-dimethyl-5alpha-cholesta-8,14,24-trien-3beta-ol + formate + oxidized [NADPH--hemoprotein reductase] + H2O + 2 H(+). It catalyses the reaction eburicol + 3 reduced [NADPH--hemoprotein reductase] + 3 O2 = 14-demethyleburicol + formate + 3 oxidized [NADPH--hemoprotein reductase] + 4 H2O + 4 H(+). The enzyme catalyses eburicol + reduced [NADPH--hemoprotein reductase] + O2 = 32-hydroxyeburicol + oxidized [NADPH--hemoprotein reductase] + H2O + H(+). The catalysed reaction is 32-hydroxyeburicol + reduced [NADPH--hemoprotein reductase] + O2 = 32-oxoeburicol + oxidized [NADPH--hemoprotein reductase] + 2 H2O + H(+). It carries out the reaction 32-oxoeburicol + reduced [NADPH--hemoprotein reductase] + O2 = 14-demethyleburicol + formate + oxidized [NADPH--hemoprotein reductase] + H2O + 2 H(+). The protein operates within steroid biosynthesis; zymosterol biosynthesis; zymosterol from lanosterol: step 1/6. Its activity is regulated as follows. The catalytic activity is inhibited by the binding of azoles clotrimazole, miconazole, fluconazole, ketoconazole, oteseconazole (VT-1161), tetraconazole, the triazole SCH39304, and the triazole derivative ICI 153066. Sterol 14alpha-demethylase that plays a critical role in the third module of ergosterol biosynthesis pathway, being ergosterol the major sterol component in fungal membranes that participates in a variety of functions. The third module or late pathway involves the ergosterol synthesis itself through consecutive reactions that mainly occur in the endoplasmic reticulum (ER) membrane. In filamentous fungi, during the initial step of this module, lanosterol (lanosta-8,24-dien-3beta-ol) can be metabolized to eburicol. Sterol 14alpha-demethylase catalyzes the three-step oxidative removal of the 14alpha-methyl group (C-32) of both these sterols in the form of formate, and converts eburicol and lanosterol to 14-demethyleburicol (4,4,24-trimethylergosta-8,14,24(28)-trienol) and 4,4-dimethyl-5alpha-cholesta-8,14,24-trien-3beta-ol, respectively, which are further metabolized by other enzymes in the pathway to ergosterol. Can also use substrates not intrinsic to fungi, such as 24,25-dihydrolanosterol (DHL), producing 4,4-dimethyl-8,14-cholestadien-3-beta-ol, but at lower rates than the endogenous substrates. This chain is Lanosterol 14-alpha demethylase, found in Candida albicans (strain SC5314 / ATCC MYA-2876) (Yeast).